We begin with the raw amino-acid sequence, 213 residues long: Histidine biosynthesis bifunctional protein HisIE (213 aa).

A phosphoribosyl-AMP cyclohydrolase region spans residues 1–114 (MLTTEKYQGL…FHPALTDFSF (114 aa)). The phosphoribosyl-ATP pyrophosphohydrolase stretch occupies residues 115–213 (LFQLENIISI…RVRSKLKKKH (99 aa)).

It in the N-terminal section; belongs to the PRA-CH family. In the C-terminal section; belongs to the PRA-PH family.

The protein localises to the cytoplasm. It catalyses the reaction 1-(5-phospho-beta-D-ribosyl)-ATP + H2O = 1-(5-phospho-beta-D-ribosyl)-5'-AMP + diphosphate + H(+). The enzyme catalyses 1-(5-phospho-beta-D-ribosyl)-5'-AMP + H2O = 1-(5-phospho-beta-D-ribosyl)-5-[(5-phospho-beta-D-ribosylamino)methylideneamino]imidazole-4-carboxamide. It functions in the pathway amino-acid biosynthesis; L-histidine biosynthesis; L-histidine from 5-phospho-alpha-D-ribose 1-diphosphate: step 2/9. Its pathway is amino-acid biosynthesis; L-histidine biosynthesis; L-histidine from 5-phospho-alpha-D-ribose 1-diphosphate: step 3/9. The polypeptide is Histidine biosynthesis bifunctional protein HisIE (Blochmanniella floridana).